Consider the following 111-residue polypeptide: uncharacterized protein (111 aa).

To A.fulgidus AF1864.

This is an uncharacterized protein from Aquifex aeolicus (strain VF5).